Consider the following 444-residue polypeptide: Serine/threonine-protein kinase 2 (444 aa).

Positions 87-444 (NRDFYHLSTG…WIDGKSTSHQ (358 aa)) constitute a Protein kinase domain. ATP-binding positions include 93-101 (LSTGGYGII) and Lys-118. The active-site Proton acceptor is the Asp-307.

The protein belongs to the protein kinase superfamily. Ser/Thr protein kinase family. Poxviruses subfamily. Phosphorylated in vivo. Autophosphorylated in vitro.

Its subcellular location is the host endoplasmic reticulum. The protein localises to the host endoplasmic reticulum-Golgi intermediate compartment. It catalyses the reaction L-seryl-[protein] + ATP = O-phospho-L-seryl-[protein] + ADP + H(+). The catalysed reaction is L-threonyl-[protein] + ATP = O-phospho-L-threonyl-[protein] + ADP + H(+). Its function is as follows. Essential serine-protein kinase involved in the early stage of virion morphogenesis. The protein is Serine/threonine-protein kinase 2 (OPG054) of Vertebrata (FPV).